The primary structure comprises 528 residues: Inositol-3-phosphate synthase (528 aa).

22 residues coordinate NAD(+): G66, G67, N68, N69, D140, Q187, R190, T228, A229, N230, T231, G279, D304, S307, N338, N339, D340, K353, G392, D393, D421, and S422.

Belongs to the myo-inositol 1-phosphate synthase family. It depends on NAD(+) as a cofactor.

The protein localises to the cytoplasm. It is found in the cytosol. The enzyme catalyses D-glucose 6-phosphate = 1D-myo-inositol 3-phosphate. It functions in the pathway polyol metabolism; myo-inositol biosynthesis; myo-inositol from D-glucose 6-phosphate: step 1/2. With respect to regulation, activated by ammonium ions. Its function is as follows. Key enzyme in myo-inositol biosynthesis pathway that catalyzes the conversion of glucose 6-phosphate to 1-myo-inositol 1-phosphate in a NAD-dependent manner. Rate-limiting enzyme in the synthesis of all inositol-containing compounds. De novo-synthesized myo-inositol is essential for incorporation into GPI (glycosylphosphatidylinositol) glycolipids in the bloodstream form. The protein is Inositol-3-phosphate synthase of Trypanosoma brucei brucei.